An 888-amino-acid polypeptide reads, in one-letter code: Alanine--tRNA ligase (888 aa).

Residues histidine 573, histidine 577, cysteine 676, and histidine 680 each contribute to the Zn(2+) site.

This sequence belongs to the class-II aminoacyl-tRNA synthetase family. Zn(2+) serves as cofactor.

Its subcellular location is the cytoplasm. It catalyses the reaction tRNA(Ala) + L-alanine + ATP = L-alanyl-tRNA(Ala) + AMP + diphosphate. Functionally, catalyzes the attachment of alanine to tRNA(Ala) in a two-step reaction: alanine is first activated by ATP to form Ala-AMP and then transferred to the acceptor end of tRNA(Ala). Also edits incorrectly charged Ser-tRNA(Ala) and Gly-tRNA(Ala) via its editing domain. This chain is Alanine--tRNA ligase, found in Corynebacterium glutamicum (strain R).